A 576-amino-acid chain; its full sequence is Arginine--tRNA ligase (576 aa).

Positions 132 to 142 match the 'HIGH' region motif; sequence ANPTGPMHIGH.

This sequence belongs to the class-I aminoacyl-tRNA synthetase family. In terms of assembly, monomer.

The protein localises to the cytoplasm. The catalysed reaction is tRNA(Arg) + L-arginine + ATP = L-arginyl-tRNA(Arg) + AMP + diphosphate. This chain is Arginine--tRNA ligase, found in Ehrlichia ruminantium (strain Welgevonden).